Here is a 404-residue protein sequence, read N- to C-terminus: tRNA pseudouridine synthase D (404 aa).

Catalysis depends on aspartate 79, which acts as the Nucleophile. The TRUD domain occupies 154–364 (GVPNRFGEQR…MEGERRPLRV (211 aa)).

The protein belongs to the pseudouridine synthase TruD family.

The enzyme catalyses uridine(13) in tRNA = pseudouridine(13) in tRNA. In terms of biological role, responsible for synthesis of pseudouridine from uracil-13 in transfer RNAs. This chain is tRNA pseudouridine synthase D, found in Geobacter metallireducens (strain ATCC 53774 / DSM 7210 / GS-15).